Here is a 453-residue protein sequence, read N- to C-terminus: Folate transporter 1 (453 aa).

Residue Asn36 is glycosylated (N-linked (GlcNAc...) asparagine). A run of 5 helical transmembrane segments spans residues 48-68 (PYWT…TDIL), 73-93 (IVMI…FGKG), 102-122 (VSFG…YSIV), 136-156 (AAAL…ISTH), and 161-181 (LVLN…AIFL). A glycan (N-linked (GlcNAc...) asparagine) is linked at Asn260. The next 5 helical transmembrane spans lie at 276 to 296 (VANG…SLFI), 306 to 326 (HGQM…YLCS), 331 to 351 (VLVA…LITA), 368 to 388 (IFGC…LVVV), and 401 to 421 (FVIY…FFMI).

Belongs to the reduced folate carrier (RFC) transporter (TC 2.A.48) family. As to expression, highly expressed in pharynx and posterior part of the intestine. Expressed at lower levels in the body wall muscles, head muscles, and vulva muscles. Highly expressed in the intestine of the early larva, levels decrease in the later stages of development.

The protein localises to the membrane. Functionally, folate transporter. In Caenorhabditis elegans, this protein is Folate transporter 1 (folt-1).